Consider the following 2530-residue polypeptide: Agglutinin-like protein 2 (2530 aa).

Residues 1 to 17 form the signal peptide; that stretch reads MLLQFLLLSLCVSVATA. 4 disulfide bridges follow: Cys-73-Cys-150, Cys-96-Cys-112, Cys-205-Cys-297, and Cys-227-Cys-256. Residues Asn-253 and Asn-315 are each glycosylated (N-linked (GlcNAc...) asparagine). ALS repeat units lie at residues 364–395, 400–431, 437–468, 473–504, 509–540, and 545–576; these read TTITTSYVGVTTSYSTKTAPIGETATVIVDVP, TTVTSEWTGTITTTTTRTNPTDSIDTVVVQVP, VTTTEYWSQSYATTTTVTAPPGGTDSVIIREP, VTTTEYWSQSYATSSTVTAPPGGTDTVIIREP, and VTTTEYWSQSFATTTTITAPPGETDTVLIREP. Asn-578 carries an N-linked (GlcNAc...) asparagine glycan. Residues 581–612 form an ALS 7 repeat; it reads VTTTEYWSQSYVTTSTITAPPGGTDTVIIREP. N-linked (GlcNAc...) asparagine glycosylation occurs at Asn-614. ALS repeat units follow at residues 617 to 648, 653 to 684, 689 to 720, 725 to 756, 761 to 792, 797 to 828, and 833 to 864; these read VTTTEYWSQSYATTTTVTAPPGGTDTVIIREP, VTTTEYWSQSYATTTTVTGPPGGTDTVIIREP, and VTTTEYWSQSYATTTTVTAPPGGTATVIIREP. N-linked (GlcNAc...) asparagine glycosylation is present at Asn-866. 4 ALS repeats span residues 869–900, 905–936, 941–972, and 977–1008; these read VTTTEYWSQSYATTTTVTGPPGGTDTVIIREP and VTTTEYWSQSYATTTTVTAPPGGTATVIIREP. Residues 954-967 show a composition bias toward low complexity; sequence TTTVTGPPGGTDTV. The tract at residues 954-975 is disordered; the sequence is TTTVTGPPGGTDTVIIREPPNP. Asn-1010 is a glycosylation site (N-linked (GlcNAc...) asparagine). 4 ALS repeats span residues 1013-1044, 1049-1077, 1085-1116, and 1121-1152; these read VTTTEYWSQSYATTTTVTGPPGGTDTVIIREP, VTTTEYWSQSYATTTTVTAPPGGTATVII, and VTTTEYWSQSYATTTTVTAPPGGTATVIIREP. Asn-1154 carries an N-linked (GlcNAc...) asparagine glycan. 6 ALS repeats span residues 1157–1188, 1193–1224, 1229–1260, 1265–1296, 1301–1332, and 1337–1368; these read VTTTEYWSQSYATTTTVTGPPGGTDTVIIREP, VTTTEYWSQSFATTTTVTAPPGGTDSVIIREP, VTTTEYWSQSYATTTTVTAPPGGTDSVIIREP, and VTTTEYWSQSYATTTTVTAPPGGTATVIIREP. An N-linked (GlcNAc...) asparagine glycan is attached at Asn-1370. An ALS 29 repeat occupies 1373 to 1404; sequence VTTTEYWSQSYATTTTVTAPPGGTATVIIREP. The N-linked (GlcNAc...) asparagine glycan is linked to Asn-1406. The ALS 30 repeat unit spans residues 1409 to 1440; sequence VTTTEYWSQSYATTTTITAPPGDTDTVIIREP. Asn-1442 carries N-linked (GlcNAc...) asparagine glycosylation. 2 ALS repeats span residues 1445–1476 and 1481–1512; these read VTTTEYWSQSFATTTTVTAPPGGTDSVIIREP and VTTTEYWSQSYATTTTVTAPPGGTATVIIREP. N-linked (GlcNAc...) asparagine glycosylation occurs at Asn-1514. One copy of the ALS 33 repeat lies at 1517–1548; that stretch reads VTTTEYWSQSYATTTTVTAPPGGTATVIIREP. An N-linked (GlcNAc...) asparagine glycan is attached at Asn-1550. The stretch at 1553-1584 is one ALS 34 repeat; it reads VTTTEYWSQSYATTTTITAPPGDTDTVIIREP. N-linked (GlcNAc...) asparagine glycosylation occurs at Asn-1586. One copy of the ALS 35 repeat lies at 1589–1620; the sequence is VTTTEYWSQSYATTTTVTAPPGGTDTVIIREP. The N-linked (GlcNAc...) asparagine glycan is linked to Asn-1622. An ALS 36 repeat occupies 1625 to 1656; the sequence is VTTTEYWSQSYATTTTVTAPPGGTATVIIREP. Asn-1658 carries an N-linked (GlcNAc...) asparagine glycan. ALS repeat units follow at residues 1661–1692 and 1697–1728; these read VTTTEYWSQSYATTTTVTGPPGSTDTVIIREP and VTTTEYWSQSYATTTTVTAPPGGTATVIIREP. The N-linked (GlcNAc...) asparagine glycan is linked to Asn-1730. One copy of the ALS 39 repeat lies at 1733-1764; it reads VTTTEYWSQSYATTTTVTAPPGGTDTVIIREP. The N-linked (GlcNAc...) asparagine glycan is linked to Asn-1766. 2 ALS repeats span residues 1769–1800 and 1805–1836; these read VTTTEYWSQSYATTTTVTAPPGGTDTVIIREP and VTTTEYWSQSYATTTTVTAPPGGTATVIIREP. Residue Asn-1838 is glycosylated (N-linked (GlcNAc...) asparagine). 2 ALS repeats span residues 1841-1872 and 1877-1907; these read VTTTEYWSESYATTTTVTGPPGGTDVILIREP and VTTTEYWSESYATTTTITAPPGATDSVRIRE. N-linked (GlcNAc...) asparagine glycosylation is present at Asn-1910. ALS repeat units lie at residues 1913–1944 and 1949–1980; these read VTTTEYWSQSYATTTTVTAPPGGTDSVIIREP and VTTTEYWSQSYATTTTVTAPPGGTATVIIREP. N-linked (GlcNAc...) asparagine glycosylation is present at Asn-1982. 3 ALS repeats span residues 1985 to 2016, 2021 to 2052, and 2057 to 2088; these read VTTTEYWSQSYATTTTVTAPPGGTDTVIIREP and VTTTEYWSQSYATTTTVTAPPGGTATVIIREP. Asn-2090 carries N-linked (GlcNAc...) asparagine glycosylation. ALS repeat units lie at residues 2093-2124 and 2129-2157; these read VTTTEYWSQSYATTTTVTGPPGGTDTVIIREP and VTTTEYWSQSYATTLTITAPPGGTNSVII. Residue Asn-2197 is glycosylated (N-linked (GlcNAc...) asparagine). Disordered stretches follow at residues 2200–2235 and 2274–2494; these read VTHLPSSSSKPVDIPSSDVVTSTNDNSLTSLTGSEN and TTII…QQTT. Positions 2204-2233 are enriched in low complexity; that stretch reads PSSSSKPVDIPSSDVVTSTNDNSLTSLTGS. Asn-2281 carries an N-linked (GlcNAc...) asparagine glycan. Residues 2282-2296 are compositionally biased toward low complexity; that stretch reads GSGKSKSGELSSTGS. Polar residues-rich tracts occupy residues 2329-2420 and 2429-2452; these read STET…SATA and NGATTKGQDTAGGNSNGSTATTNI. Asn-2444 and Asn-2466 each carry an N-linked (GlcNAc...) asparagine glycan. Composition is skewed to low complexity over residues 2453–2471 and 2482–2494; these read QGGNNEPGNQPGTNTTGEP and SISQPTTLSQQTT. Asp-2507 carries the GPI-anchor amidated aspartate lipid modification. Residues 2508–2530 constitute a propeptide, removed in mature form; sequence GSGSIVQHSGWLYVLLTAISIFF.

Belongs to the ALS family. In terms of processing, N-glycosylated and O-glycosylated. The GPI-anchor is attached to the protein in the endoplasmic reticulum and serves to target the protein to the cell surface. There, the glucosamine-inositol phospholipid moiety is cleaved off and the GPI-modified mannoprotein is covalently attached via its lipidless GPI glycan remnant to the 1,6-beta-glucan of the outer cell wall layer.

It localises to the cell membrane. Its subcellular location is the secreted. It is found in the cell wall. In terms of biological role, cell surface adhesion protein which mediates both yeast-to-host tissue adherence and yeast aggregation. Plays an important role in the pathogenesis of C.albicans infections. This is Agglutinin-like protein 2 (ALS2) from Candida albicans (strain SC5314 / ATCC MYA-2876) (Yeast).